A 156-amino-acid chain; its full sequence is Small ribosomal subunit protein uS7 (156 aa).

This sequence belongs to the universal ribosomal protein uS7 family. As to quaternary structure, part of the 30S ribosomal subunit. Contacts proteins S9 and S11.

In terms of biological role, one of the primary rRNA binding proteins, it binds directly to 16S rRNA where it nucleates assembly of the head domain of the 30S subunit. Is located at the subunit interface close to the decoding center, probably blocks exit of the E-site tRNA. The chain is Small ribosomal subunit protein uS7 from Erythrobacter litoralis (strain HTCC2594).